The primary structure comprises 190 residues: Probable oligoribonuclease (190 aa).

One can recognise an Exonuclease domain in the interval 19-181 (MVWVDLEMTG…QDIEESIEEL (163 aa)). Tyrosine 140 is an active-site residue.

Belongs to the oligoribonuclease family.

Its function is as follows. 3'-to-5' exoribonuclease specific for small oligoribonucleotides. The chain is Probable oligoribonuclease (rexo2-1) from Dictyostelium discoideum (Social amoeba).